A 185-amino-acid chain; its full sequence is Ribosome-recycling factor (185 aa).

This sequence belongs to the RRF family.

The protein resides in the cytoplasm. In terms of biological role, responsible for the release of ribosomes from messenger RNA at the termination of protein biosynthesis. May increase the efficiency of translation by recycling ribosomes from one round of translation to another. This Roseiflexus castenholzii (strain DSM 13941 / HLO8) protein is Ribosome-recycling factor.